The following is a 117-amino-acid chain: Ig heavy chain V region MOPC 173 (117 aa).

In terms of domain architecture, Ig-like spans 1 to 116 (EVKLLESGGP…WGQGTSVTVS (116 aa)). An intrachain disulfide couples cysteine 22 to cysteine 96.

The chain is Ig heavy chain V region MOPC 173 from Mus musculus (Mouse).